Consider the following 77-residue polypeptide: Large ribosomal subunit protein eL14 (77 aa).

Belongs to the eukaryotic ribosomal protein eL14 family.

The chain is Large ribosomal subunit protein eL14 from Methanococcus maripaludis (strain C7 / ATCC BAA-1331).